A 324-amino-acid polypeptide reads, in one-letter code: Transcription factor MYB74 (324 aa).

2 consecutive HTH myb-type domains span residues 10 to 62 (KNGL…TNYL) and 63 to 117 (RPDI…RKRL). 2 DNA-binding regions (H-T-H motif) span residues 38–62 (WRTLPKNAGLQRCGKSCRLRWTNYL) and 90–113 (WSAIAARLPGRTDNEIKNYWNTHI).

Highly expressed in flowers and at lower levels in rosette leaves and cauline leaves. Expressed at low levels in roots, stems and siliques.

The protein resides in the nucleus. In terms of biological role, probable transcription factor that may function in salt stress response. This chain is Transcription factor MYB74, found in Arabidopsis thaliana (Mouse-ear cress).